Consider the following 605-residue polypeptide: Tyrosyl-DNA phosphodiesterase 1 (605 aa).

The Nuclear localization signal motif lies at 81-86 (RKKVKP). Residue His236 is the Nucleophile of the active site. Lys238 provides a ligand contact to substrate. Residues 379 to 382 (SLGS) are interaction with DNA. The active-site Proton donor/acceptor is His466. Lys468 contributes to the substrate binding site.

The protein belongs to the tyrosyl-DNA phosphodiesterase family. Ubiquitous, with a low level in roots.

It localises to the nucleus. Inhibited by vanadate analogs. In terms of biological role, DNA repair enzyme that can remove a variety of covalent adducts from DNA through hydrolysis of a 3'-phosphodiester bond, giving rise to DNA with a free 3' phosphate. Catalyzes the hydrolysis of dead-end complexes between DNA and the topoisomerase I active site tyrosine residue. The chain is Tyrosyl-DNA phosphodiesterase 1 from Arabidopsis thaliana (Mouse-ear cress).